The chain runs to 357 residues: Protein pelota homolog (357 aa).

The protein belongs to the eukaryotic release factor 1 family. Pelota subfamily. In terms of assembly, monomer. Requires a divalent metal cation as cofactor.

Its subcellular location is the cytoplasm. May function in recognizing stalled ribosomes, interact with stem-loop structures in stalled mRNA molecules, and effect endonucleolytic cleavage of the mRNA. May play a role in the release non-functional ribosomes and degradation of damaged mRNAs. Has endoribonuclease activity. The sequence is that of Protein pelota homolog from Thermococcus kodakarensis (strain ATCC BAA-918 / JCM 12380 / KOD1) (Pyrococcus kodakaraensis (strain KOD1)).